Reading from the N-terminus, the 358-residue chain is DNA replication and repair protein RecF (358 aa).

30–37 (GNNGSGKT) is a binding site for ATP.

The protein belongs to the RecF family.

Its subcellular location is the cytoplasm. Its function is as follows. The RecF protein is involved in DNA metabolism; it is required for DNA replication and normal SOS inducibility. RecF binds preferentially to single-stranded, linear DNA. It also seems to bind ATP. This is DNA replication and repair protein RecF from Histophilus somni (strain 2336) (Haemophilus somnus).